Reading from the N-terminus, the 92-residue chain is Large ribosomal subunit protein bL34m (92 aa).

The transit peptide at 1–46 (MALLAGSLLGPTSRSAALLGGRWLQPRAWLGFPDAWGLPTPQQARG) directs the protein to the mitochondrion. Residues 40 to 57 (TPQQARGKSRGNEYQPSN) show a composition bias toward polar residues. The disordered stretch occupies residues 40 to 63 (TPQQARGKSRGNEYQPSNIKRKNK). S71 bears the Phosphoserine mark.

The protein belongs to the bacterial ribosomal protein bL34 family. Component of the mitochondrial ribosome large subunit (39S) which comprises a 16S rRNA and about 50 distinct proteins.

The protein resides in the mitochondrion. The protein is Large ribosomal subunit protein bL34m (MRPL34) of Macaca fascicularis (Crab-eating macaque).